Here is a 303-residue protein sequence, read N- to C-terminus: MRLRHVVSSLDLTRDDYFRIFELADKFYDVKKLNYLSGKVVSLAFFEPSTRTAQSFHTAAIKLGADVIGFASEESTSIAKGENLADTIRMLNNYSNCIVMRHKFDGAALFASEISDIPIINAGDGKHEHPTQAVIDLYTVYKAFGEIDGRTFALLGDLKYARTVNSLLRALTRFKPKKVFLISPSQLKVRREILDELNYPVIETENPYDVIQEIDVLYVTRIQKERFVDEVEYEKVKESYVVDLKLVNMMKKDGIILHPLPRVTEIDRRVDKTVNAKYFYQASLAVPVRMALFYEVLGDREDD.

Carbamoyl phosphate is bound by residues Arg-51 and Thr-52. Lys-80 serves as a coordination point for L-aspartate. Residues Arg-101, His-129, and Gln-132 each coordinate carbamoyl phosphate. Residues Arg-162 and Arg-221 each contribute to the L-aspartate site. Carbamoyl phosphate contacts are provided by Leu-260 and Pro-261.

This sequence belongs to the aspartate/ornithine carbamoyltransferase superfamily. ATCase family. As to quaternary structure, heterooligomer of catalytic and regulatory chains.

The catalysed reaction is carbamoyl phosphate + L-aspartate = N-carbamoyl-L-aspartate + phosphate + H(+). It participates in pyrimidine metabolism; UMP biosynthesis via de novo pathway; (S)-dihydroorotate from bicarbonate: step 2/3. In terms of biological role, catalyzes the condensation of carbamoyl phosphate and aspartate to form carbamoyl aspartate and inorganic phosphate, the committed step in the de novo pyrimidine nucleotide biosynthesis pathway. The sequence is that of Aspartate carbamoyltransferase catalytic subunit from Saccharolobus solfataricus (strain ATCC 35092 / DSM 1617 / JCM 11322 / P2) (Sulfolobus solfataricus).